Consider the following 289-residue polypeptide: Metal-staphylopine import system permease protein CntC (289 aa).

5 helical membrane-spanning segments follow: residues 13 to 33 (AVIALGIIVLYVFLGLAAPLV), 77 to 97 (LLYVFVALFVSVLIGSILGFL), 115 to 135 (VMLAFPSYVVTLALIALFGMG), 194 to 214 (IAIISSSSMCSMILQISGFSF), and 249 to 269 (IAIVIIVMAFNFLSDALQIAI). The 190-residue stretch at 73 to 262 (IRPSLLYVFV…IIVMAFNFLS (190 aa)) folds into the ABC transmembrane type-1 domain.

Belongs to the binding-protein-dependent transport system permease family. In terms of assembly, the complex is composed of two ATP-binding proteins (CntD and CntF), two transmembrane proteins (CntB and CntC) and a solute-binding protein (CntA).

Its subcellular location is the cell membrane. Functionally, part of the ABC transporter complex CntABCDF (Opp1) involved in the uptake of metal in complex with the metallophore staphylopine (StP). May be involved in the import of a large array of divalent metals ions such as nickel, cobalt, zinc, copper and iron. Probably responsible for the translocation of the substrate across the membrane. This chain is Metal-staphylopine import system permease protein CntC, found in Staphylococcus aureus (strain Mu50 / ATCC 700699).